Consider the following 456-residue polypeptide: Bifunctional protein GlmU (456 aa).

The pyrophosphorylase stretch occupies residues 1-228 (MKLKAIILAA…YEDIMAVNSR (228 aa)). UDP-N-acetyl-alpha-D-glucosamine-binding positions include 8-11 (LAAG), K22, Q72, 77-78 (GT), 99-101 (YGD), G138, E153, N168, and N226. D101 is a binding site for Mg(2+). N226 is a binding site for Mg(2+). The tract at residues 229-249 (EQLAEVEEVMQRRIVKKHMEA) is linker. The interval 250–456 (GVTFIDPQST…WVARKGVGKK (207 aa)) is N-acetyltransferase. The UDP-N-acetyl-alpha-D-glucosamine site is built by R331 and K349. The active-site Proton acceptor is H361. 2 residues coordinate UDP-N-acetyl-alpha-D-glucosamine: Y364 and N375. Acetyl-CoA is bound by residues 384 to 385 (NY), S403, S421, and R438.

It in the N-terminal section; belongs to the N-acetylglucosamine-1-phosphate uridyltransferase family. The protein in the C-terminal section; belongs to the transferase hexapeptide repeat family. As to quaternary structure, homotrimer. The cofactor is Mg(2+).

Its subcellular location is the cytoplasm. The enzyme catalyses alpha-D-glucosamine 1-phosphate + acetyl-CoA = N-acetyl-alpha-D-glucosamine 1-phosphate + CoA + H(+). It catalyses the reaction N-acetyl-alpha-D-glucosamine 1-phosphate + UTP + H(+) = UDP-N-acetyl-alpha-D-glucosamine + diphosphate. Its pathway is nucleotide-sugar biosynthesis; UDP-N-acetyl-alpha-D-glucosamine biosynthesis; N-acetyl-alpha-D-glucosamine 1-phosphate from alpha-D-glucosamine 6-phosphate (route II): step 2/2. It functions in the pathway nucleotide-sugar biosynthesis; UDP-N-acetyl-alpha-D-glucosamine biosynthesis; UDP-N-acetyl-alpha-D-glucosamine from N-acetyl-alpha-D-glucosamine 1-phosphate: step 1/1. It participates in bacterial outer membrane biogenesis; LPS lipid A biosynthesis. In terms of biological role, catalyzes the last two sequential reactions in the de novo biosynthetic pathway for UDP-N-acetylglucosamine (UDP-GlcNAc). The C-terminal domain catalyzes the transfer of acetyl group from acetyl coenzyme A to glucosamine-1-phosphate (GlcN-1-P) to produce N-acetylglucosamine-1-phosphate (GlcNAc-1-P), which is converted into UDP-GlcNAc by the transfer of uridine 5-monophosphate (from uridine 5-triphosphate), a reaction catalyzed by the N-terminal domain. The polypeptide is Bifunctional protein GlmU (Alkaliphilus metalliredigens (strain QYMF)).